The following is a 366-amino-acid chain: D-alanine--D-alanine ligase (366 aa).

The ATP-grasp domain maps to 149–358; the sequence is KIAFDHAGLP…FSELVDTLIQ (210 aa). Residue 185-240 participates in ATP binding; sequence ETTLEYPCFVKPANLGSSVGIAKVRSRSELETALDNAASYDRRIIVEAGVEAKELE. Mg(2+)-binding residues include aspartate 311, glutamate 325, and asparagine 327.

The protein belongs to the D-alanine--D-alanine ligase family. Requires Mg(2+) as cofactor. The cofactor is Mn(2+).

Its subcellular location is the cytoplasm. It carries out the reaction 2 D-alanine + ATP = D-alanyl-D-alanine + ADP + phosphate + H(+). It participates in cell wall biogenesis; peptidoglycan biosynthesis. Cell wall formation. This chain is D-alanine--D-alanine ligase, found in Trichodesmium erythraeum (strain IMS101).